Reading from the N-terminus, the 208-residue chain is uncharacterized protein (208 aa).

The N-terminal stretch at 1 to 34 (MPSHCRERLPFALHFFAVAYGASLWILGSHGLAA) is a signal peptide.

This is an uncharacterized protein from Sinorhizobium fredii (strain NBRC 101917 / NGR234).